The sequence spans 495 residues: Serine/threonine-protein kinase STN8, chloroplastic (495 aa).

The N-terminal 49 residues, Met-1–Arg-49, are a transit peptide targeting the chloroplast. The 345-residue stretch at Phe-133 to Phe-477 folds into the Protein kinase domain. Residues Leu-139 to Val-147 and Lys-186 contribute to the ATP site. Residue Asp-308 is the Proton acceptor of the active site.

Belongs to the protein kinase superfamily. Ser/Thr protein kinase family.

It is found in the plastid. Its subcellular location is the chloroplast thylakoid. It carries out the reaction L-seryl-[protein] + ATP = O-phospho-L-seryl-[protein] + ADP + H(+). It catalyses the reaction L-threonyl-[protein] + ATP = O-phospho-L-threonyl-[protein] + ADP + H(+). Its function is as follows. Light-dependent serine/threonine protein kinase that specifically phosphorylates N-terminal threonine residues in psbA/D1, psbD/D2, psbC/CP43 and psbH, which are components of the core antenna complex of photosystem II. Phosphorylation of PSII core components facilitates the exchange of chlorophyll proteins between the grana and the stroma lamellae. Also involved in the phosphorylation of the calcium-sensing receptor (CaS). The polypeptide is Serine/threonine-protein kinase STN8, chloroplastic (STN8) (Arabidopsis thaliana (Mouse-ear cress)).